The sequence spans 215 residues: 3-demethoxyubiquinol 3-hydroxylase (215 aa).

Positions 64, 94, 97, 146, 178, and 181 each coordinate Fe cation.

It belongs to the COQ7 family. Requires Fe cation as cofactor.

The protein resides in the cell membrane. It carries out the reaction a 5-methoxy-2-methyl-3-(all-trans-polyprenyl)benzene-1,4-diol + AH2 + O2 = a 3-demethylubiquinol + A + H2O. It participates in cofactor biosynthesis; ubiquinone biosynthesis. Catalyzes the hydroxylation of 2-nonaprenyl-3-methyl-6-methoxy-1,4-benzoquinol during ubiquinone biosynthesis. The chain is 3-demethoxyubiquinol 3-hydroxylase from Pseudomonas putida (strain GB-1).